Consider the following 216-residue polypeptide: Small ribosomal subunit protein uS3 (216 aa).

Positions 38-106 (LRKMLKDKLY…QANIEIKEVR (69 aa)) constitute a KH type-2 domain.

Belongs to the universal ribosomal protein uS3 family. Part of the 30S ribosomal subunit. Forms a tight complex with proteins S10 and S14.

Its function is as follows. Binds the lower part of the 30S subunit head. Binds mRNA in the 70S ribosome, positioning it for translation. The protein is Small ribosomal subunit protein uS3 of Thermodesulfovibrio yellowstonii (strain ATCC 51303 / DSM 11347 / YP87).